An 839-amino-acid chain; its full sequence is Taste receptor type 1 member 2 (839 aa).

A signal peptide spans 1-19 (MRPRATTICSLFFLLRVLA). Residues 20–566 (EPAKNSDFYL…AFLEWHEAPT (547 aa)) lie on the Extracellular side of the membrane. Residues N84, N127, N248, N292, N312, N368, N428, N487, and N527 are each glycosylated (N-linked (GlcNAc...) asparagine). The helical transmembrane segment at 567-587 (IVVALLAALGFLSTLAILVIF) threads the bilayer. Residues 588 to 602 (WRHFQTPMVRSAGGP) lie on the Cytoplasmic side of the membrane. The chain crosses the membrane as a helical span at residues 603 to 623 (MCFLMLTLLLVAYMVVPVYVG). Residues 624–635 (PPKVSTCFCRQA) lie on the Extracellular side of the membrane. Residues 636–656 (LFPLCFTICISCIAVRSFQIV) traverse the membrane as a helical segment. Over 657-681 (CVFKMASRFPRAYSYWVRYQGPYVS) the chain is Cytoplasmic. The helical transmembrane segment at 682–702 (MAFITVLKMVTVVIGMLATGL) threads the bilayer. The Extracellular segment spans residues 703-727 (NPTTRIDPDDPKIMIVSCNPNYRNS). The helical transmembrane segment at 728 to 748 (LFFNTGLDLLLSVVGFSFAYM) threads the bilayer. The Cytoplasmic segment spans residues 749-760 (GKELPTNYNEAK). A helical transmembrane segment spans residues 761 to 781 (FITLSMTFYFTSSVSLCTFMS). Topologically, residues 782 to 784 (AYN) are extracellular. The helical transmembrane segment at 785–805 (GVLVTIMDLLVTVLNLLAISL) threads the bilayer. Residues 806–839 (GYFGPKCYMILFYPERNTPAYFNSMIQGYTMRRD) are Cytoplasmic-facing.

It belongs to the G-protein coupled receptor 3 family. TAS1R subfamily. Forms heterodimers with TAS1R3.

The protein localises to the cell membrane. Putative taste receptor. TAS1R2/TAS1R3 recognizes diverse natural and synthetic sweeteners. This is Taste receptor type 1 member 2 (TAS1R2) from Macaca mulatta (Rhesus macaque).